The following is a 194-amino-acid chain: Protein GrpE 1 (194 aa).

The segment at Met-1–Asn-22 is disordered.

This sequence belongs to the GrpE family. As to quaternary structure, homodimer.

It is found in the cytoplasm. Participates actively in the response to hyperosmotic and heat shock by preventing the aggregation of stress-denatured proteins, in association with DnaK and GrpE. It is the nucleotide exchange factor for DnaK and may function as a thermosensor. Unfolded proteins bind initially to DnaJ; upon interaction with the DnaJ-bound protein, DnaK hydrolyzes its bound ATP, resulting in the formation of a stable complex. GrpE releases ADP from DnaK; ATP binding to DnaK triggers the release of the substrate protein, thus completing the reaction cycle. Several rounds of ATP-dependent interactions between DnaJ, DnaK and GrpE are required for fully efficient folding. The protein is Protein GrpE 1 of Buchnera aphidicola subsp. Acyrthosiphon pisum (strain APS) (Acyrthosiphon pisum symbiotic bacterium).